Consider the following 320-residue polypeptide: MARNKIALIGAGQIGGTLAHLAGLKELGDIVLFDIAEGTPQGKALDLAESAPVDGFNAHLSGANDYSAIEGADVVIVTAGVPRKPGMSRDDLLGINLKVMESVGAGIKTYAKDAFVICITNPLDAMVWALQKASGLPPQKVVGMAGVLDSARFRYFLSDEFKVSVEDVTAFVLGGHGDDMVPLLRYSTVAGIPLPDLVKIGWTTQEKLDAIVKRTRGGGGEIVNLLKTGSAFYAPAASAIAMAESYLKDKRRVLPVAAQLNGEYGVDKLYVGVPVVIGANGVEKVVEITLDDAEKELFKKSVASVQGLVEACKTINPAFA.

Residues 10-15 (GAGQIG) and Asp-34 contribute to the NAD(+) site. Positions 83 and 89 each coordinate substrate. Residues Asn-96 and 119 to 121 (ITN) contribute to the NAD(+) site. Asn-121 and Arg-152 together coordinate substrate. His-176 functions as the Proton acceptor in the catalytic mechanism.

The protein belongs to the LDH/MDH superfamily. MDH type 3 family.

It carries out the reaction (S)-malate + NAD(+) = oxaloacetate + NADH + H(+). Functionally, catalyzes the reversible oxidation of malate to oxaloacetate. This chain is Malate dehydrogenase, found in Beijerinckia indica subsp. indica (strain ATCC 9039 / DSM 1715 / NCIMB 8712).